Here is a 496-residue protein sequence, read N- to C-terminus: Angiopoietin-2 (496 aa).

The first 18 residues, 1 to 18 (MWQLVFLTLSCDLAVATA), serve as a signal peptide directing secretion. N-linked (GlcNAc...) asparagine glycans are attached at residues asparagine 90, asparagine 120, asparagine 134, asparagine 152, asparagine 241, and asparagine 304. Residues 167–249 (STNKLEKQIL…VNNSVLQKQQ (83 aa)) are a coiled coil. Residues 275 to 495 (KDEQIIFRDC…ATTMMIRPAD (221 aa)) enclose the Fibrinogen C-terminal domain. Cysteine 284 and cysteine 313 form a disulfide bridge. Positions 429, 431, 433, and 435 each coordinate Ca(2+). Disulfide bonds link cysteine 433/cysteine 435 and cysteine 437/cysteine 450.

As to quaternary structure, interacts with TEK/TIE2, competing for the same binding site as ANGPT1. Interacts with ITGA5. Interacts with SVEP1/polydom. Interacts with THBD; this interaction significantly inhibits the generation of activated PC and TAFIa/CPB2 by the thrombin/thrombomodulin complex.

It is found in the secreted. Binds to TEK/TIE2, competing for the ANGPT1 binding site, and modulating ANGPT1 signaling. Can induce tyrosine phosphorylation of TEK/TIE2 in the absence of ANGPT1. In the absence of angiogenic inducers, such as VEGF, ANGPT2-mediated loosening of cell-matrix contacts may induce endothelial cell apoptosis with consequent vascular regression. In concert with VEGF, it may facilitate endothelial cell migration and proliferation, thus serving as a permissive angiogenic signal. Involved in the regulation of lymphangiogenesis. In Bos taurus (Bovine), this protein is Angiopoietin-2 (ANGPT2).